The sequence spans 284 residues: Release factor glutamine methyltransferase (284 aa).

Residues 123–127, aspartate 146, tryptophan 174, and asparagine 189 each bind S-adenosyl-L-methionine; that span reads GTGTG. Substrate is bound at residue 189 to 192; it reads NPPY.

This sequence belongs to the protein N5-glutamine methyltransferase family. PrmC subfamily.

The enzyme catalyses L-glutaminyl-[peptide chain release factor] + S-adenosyl-L-methionine = N(5)-methyl-L-glutaminyl-[peptide chain release factor] + S-adenosyl-L-homocysteine + H(+). Its function is as follows. Methylates the class 1 translation termination release factors RF1/PrfA and RF2/PrfB on the glutamine residue of the universally conserved GGQ motif. This Francisella tularensis subsp. tularensis (strain SCHU S4 / Schu 4) protein is Release factor glutamine methyltransferase.